A 241-amino-acid chain; its full sequence is Uridylate kinase (241 aa).

15 to 18 (KLSG) contacts ATP. Positions 23–28 (GTEGFG) are involved in allosteric activation by GTP. Gly-57 serves as a coordination point for UMP. 2 residues coordinate ATP: Gly-58 and Arg-62. UMP-binding positions include Asp-77 and 138–145 (TGNPFFTT). ATP contacts are provided by Thr-165, Phe-171, and Asp-174.

Belongs to the UMP kinase family. In terms of assembly, homohexamer.

Its subcellular location is the cytoplasm. It catalyses the reaction UMP + ATP = UDP + ADP. It functions in the pathway pyrimidine metabolism; CTP biosynthesis via de novo pathway; UDP from UMP (UMPK route): step 1/1. Allosterically activated by GTP. Inhibited by UTP. Its function is as follows. Catalyzes the reversible phosphorylation of UMP to UDP. The protein is Uridylate kinase of Shigella dysenteriae serotype 1 (strain Sd197).